The primary structure comprises 261 residues: ATP synthase subunit a (261 aa).

Helical transmembrane passes span 30–50 (VLFT…GLFM), 63–83 (WQVA…ANIG), 96–116 (LFMF…VLGL), 125–145 (IAIT…VGFW), 151–171 (FFSL…IAPI), 187–207 (LFVA…FVIN), 214–234 (LWLG…ISAL), and 235–255 (ELLV…LYIN).

It belongs to the ATPase A chain family. In terms of assembly, F-type ATPases have 2 components, CF(1) - the catalytic core - and CF(0) - the membrane proton channel. CF(1) has five subunits: alpha(3), beta(3), gamma(1), delta(1), epsilon(1). CF(0) has three main subunits: a(1), b(2) and c(9-12). The alpha and beta chains form an alternating ring which encloses part of the gamma chain. CF(1) is attached to CF(0) by a central stalk formed by the gamma and epsilon chains, while a peripheral stalk is formed by the delta and b chains.

The protein resides in the cell inner membrane. Key component of the proton channel; it plays a direct role in the translocation of protons across the membrane. This chain is ATP synthase subunit a, found in Sphingopyxis alaskensis (strain DSM 13593 / LMG 18877 / RB2256) (Sphingomonas alaskensis).